A 406-amino-acid polypeptide reads, in one-letter code: Methylthioribose-1-phosphate isomerase (406 aa).

Asp277 (proton donor) is an active-site residue.

The protein belongs to the eIF-2B alpha/beta/delta subunits family. MtnA subfamily.

Its subcellular location is the cytoplasm. The protein localises to the nucleus. The enzyme catalyses 5-(methylsulfanyl)-alpha-D-ribose 1-phosphate = 5-(methylsulfanyl)-D-ribulose 1-phosphate. It participates in amino-acid biosynthesis; L-methionine biosynthesis via salvage pathway; L-methionine from S-methyl-5-thio-alpha-D-ribose 1-phosphate: step 1/6. Functionally, catalyzes the interconversion of methylthioribose-1-phosphate (MTR-1-P) into methylthioribulose-1-phosphate (MTRu-1-P). The sequence is that of Methylthioribose-1-phosphate isomerase from Debaryomyces hansenii (strain ATCC 36239 / CBS 767 / BCRC 21394 / JCM 1990 / NBRC 0083 / IGC 2968) (Yeast).